The following is a 249-amino-acid chain: Superoxide dismutase 1 copper chaperone (249 aa).

The region spanning 6-69 is the HMA domain; that stretch reads TYEATYAIPM…TLRNCGKDAI (64 aa). His16 lines the Zn(2+) pocket. 2 residues coordinate Cu cation: Cys17 and Cys20. Cysteines 27 and 64 form a disulfide. Cys229 and Cys231 together coordinate Cu cation.

This sequence belongs to the CCS1 family. Homodimer, and heterodimer with apo-SOD1. Zinc-binding at His-16 of CCS1 and 'Glu-43' of apo-SOD1 is required for this heterodimerization. Cu(2+) is required as a cofactor.

It localises to the cytoplasm. It is found in the mitochondrion intermembrane space. Its function is as follows. Copper chaperone for apo superoxide dismutase 1 (SOD1). Binds copper ions and delivers them specifically to apo-SOD1. This Saccharomyces cerevisiae (strain ATCC 204508 / S288c) (Baker's yeast) protein is Superoxide dismutase 1 copper chaperone (CCS1).